A 322-amino-acid polypeptide reads, in one-letter code: Cyanophycinase (322 aa).

Active-site charge relay system residues include serine 178, glutamate 196, and histidine 220.

The protein belongs to the peptidase S51 family.

The enzyme catalyses [L-4-(L-arginin-2-N-yl)aspartate](n) + H2O = [L-4-(L-arginin-2-N-yl)aspartate](n-1) + L-4-(L-arginin-2-N-yl)aspartate. Functionally, exopeptidase that catalyzes the hydrolytic cleavage of multi-L-arginyl-poly-L-aspartic acid (cyanophycin; a water-insoluble reserve polymer) into aspartate-arginine dipeptides. In Synechococcus elongatus, this protein is Cyanophycinase (cphB).